A 22-amino-acid polypeptide reads, in one-letter code: Pectinesterase (22 aa).

Asp6 serves as the catalytic Proton donor. Substrate contacts are provided by Arg19 and Trp21.

This sequence belongs to the pectinesterase family.

It is found in the secreted. It localises to the cell wall. The enzyme catalyses [(1-&gt;4)-alpha-D-galacturonosyl methyl ester](n) + n H2O = [(1-&gt;4)-alpha-D-galacturonosyl](n) + n methanol + n H(+). The protein operates within glycan metabolism; pectin degradation; 2-dehydro-3-deoxy-D-gluconate from pectin: step 1/5. In Capsicum chinense (Scotch bonnet), this protein is Pectinesterase.